The primary structure comprises 275 residues: Caspase-3 (275 aa).

M1 is subject to N-acetylmethionine. 2 propeptides span residues 1–9 and 10–28; these read MENTENSVD and SKSI…KSMD. K11 is subject to N6-acetyllysine. The residue at position 26 (S26) is a Phosphoserine. Residues H121 and C163 contribute to the active site. C163 carries the post-translational modification S-nitrosocysteine; in inhibited form.

This sequence belongs to the peptidase C14A family. Heterotetramer that consists of two anti-parallel arranged heterodimers, each one formed by a 17 kDa (p17) and a 12 kDa (p12) subunit. Interacts with BIRC6/bruce. Cleavage by granzyme B, caspase-6, caspase-8 and caspase-10 generates the two active subunits. Additional processing of the propeptides is likely due to the autocatalytic activity of the activated protease. Active heterodimers between the small subunit of caspase-7 protease and the large subunit of caspase-3 also occur and vice versa. Post-translationally, S-nitrosylated on its catalytic site cysteine in unstimulated cell lines and denitrosylated upon activation of the Fas apoptotic pathway, associated with an increase in intracellular caspase activity. Fas therefore activates caspase-3 not only by inducing the cleavage of the caspase zymogen to its active subunits, but also by stimulating the denitrosylation of its active site thiol. In terms of processing, ubiquitinated by BIRC6; this activity is inhibited by DIABLO/SMAC.

It localises to the cytoplasm. It carries out the reaction Strict requirement for an Asp residue at positions P1 and P4. It has a preferred cleavage sequence of Asp-Xaa-Xaa-Asp-|- with a hydrophobic amino-acid residue at P2 and a hydrophilic amino-acid residue at P3, although Val or Ala are also accepted at this position.. Inhibited by BIRC6; following inhibition of BIRC6-caspase binding by DIABLO/SMAC, BIRC6 is subjected to caspase cleavage, leading to an increase in active caspases. Its function is as follows. Involved in the activation cascade of caspases responsible for apoptosis execution. At the onset of apoptosis, it proteolytically cleaves poly(ADP-ribose) polymerase PARP1 at a '216-Asp-|-Gly-217' bond. Cleaves and activates sterol regulatory element binding proteins (SREBPs) between the basic helix-loop-helix leucine zipper domain and the membrane attachment domain. Cleaves and activates caspase-6, -7 and -9 (CASP6, CASP7 and CASP9, respectively). Cleaves and inactivates interleukin-18 (IL18). Triggers cell adhesion in sympathetic neurons through RET cleavage. Cleaves IL-1 beta between an Asp and an Ala, releasing the mature cytokine which is involved in a variety of inflammatory processes. Cleaves and inhibits serine/threonine-protein kinase AKT1 in response to oxidative stress. Acts as an inhibitor of type I interferon production during virus-induced apoptosis by mediating cleavage of antiviral proteins CGAS, IRF3 and MAVS, thereby preventing cytokine overproduction. Also involved in pyroptosis by mediating cleavage and activation of gasdermin-E (GSDME). Cleaves XRCC4 and phospholipid scramblase proteins XKR4, XKR8 and XKR9, leading to promote phosphatidylserine exposure on apoptotic cell surface. Cleaves BIRC6 following inhibition of BIRC6-caspase binding by DIABLO/SMAC. The protein is Caspase-3 (CASP3) of Bos taurus (Bovine).